A 504-amino-acid chain; its full sequence is Maturase K (504 aa).

Belongs to the intron maturase 2 family. MatK subfamily.

The protein resides in the plastid. It is found in the chloroplast. In terms of biological role, usually encoded in the trnK tRNA gene intron. Probably assists in splicing its own and other chloroplast group II introns. The polypeptide is Maturase K (Gossypium barbadense (Sea Island cotton)).